Here is a 267-residue protein sequence, read N- to C-terminus: Indole-3-glycerol phosphate synthase (267 aa).

It belongs to the TrpC family.

It catalyses the reaction 1-(2-carboxyphenylamino)-1-deoxy-D-ribulose 5-phosphate + H(+) = (1S,2R)-1-C-(indol-3-yl)glycerol 3-phosphate + CO2 + H2O. It participates in amino-acid biosynthesis; L-tryptophan biosynthesis; L-tryptophan from chorismate: step 4/5. The sequence is that of Indole-3-glycerol phosphate synthase from Verminephrobacter eiseniae (strain EF01-2).